A 939-amino-acid chain; its full sequence is Vacuolar membrane protease (939 aa).

At M1 to K11 the chain is on the cytoplasmic side. A helical transmembrane segment spans residues T12–D32. At K33–L356 the chain is on the vacuolar side. N59, N88, and N114 each carry an N-linked (GlcNAc...) asparagine glycan. Residues H149 and D161 each contribute to the Zn(2+) site. E193 serves as the catalytic Proton acceptor. Residues E194, E219, and H293 each contribute to the Zn(2+) site. A glycan (N-linked (GlcNAc...) asparagine) is linked at N326. The helical transmembrane segment at F357–I377 threads the bilayer. Topologically, residues V378–S388 are cytoplasmic. A helical membrane pass occupies residues G389–T409. Residues T410 to N424 are Vacuolar-facing. The helical transmembrane segment at F425–T445 threads the bilayer. The Cytoplasmic portion of the chain corresponds to M446–S453. The chain crosses the membrane as a helical span at residues F454–Y474. Residues Q475 to P491 lie on the Vacuolar side of the membrane. A helical transmembrane segment spans residues F492 to F512. Residues K513–K588 lie on the Cytoplasmic side of the membrane. A compositionally biased stretch (basic and acidic residues) spans Y540–R552. The segment at Y540–T561 is disordered. A helical membrane pass occupies residues L589–L609. Over L610–K636 the chain is Vacuolar. N622 carries an N-linked (GlcNAc...) asparagine glycan. A helical membrane pass occupies residues I637–G657. Residues C658–T663 are Cytoplasmic-facing. The chain crosses the membrane as a helical span at residues L664–M684. Residues N685 to L939 are Vacuolar-facing. 2 N-linked (GlcNAc...) asparagine glycosylation sites follow: N810 and N820.

It belongs to the peptidase M28 family. It depends on Zn(2+) as a cofactor.

The protein resides in the vacuole membrane. Functionally, may be involved in vacuolar sorting and osmoregulation. This is Vacuolar membrane protease from Vanderwaltozyma polyspora (strain ATCC 22028 / DSM 70294 / BCRC 21397 / CBS 2163 / NBRC 10782 / NRRL Y-8283 / UCD 57-17) (Kluyveromyces polysporus).